Reading from the N-terminus, the 263-residue chain is Small ribosomal subunit protein eS4 (263 aa).

The region spanning 42–104 (LPLIIFLRNR…TGEHFRLVYD (63 aa)) is the S4 RNA-binding domain.

It belongs to the eukaryotic ribosomal protein eS4 family. In terms of assembly, component of the small ribosomal subunit.

The protein localises to the cytoplasm. In terms of biological role, component of the small ribosomal subunit. The ribosome is a large ribonucleoprotein complex responsible for the synthesis of proteins in the cell. This Xenopus laevis (African clawed frog) protein is Small ribosomal subunit protein eS4 (rps4).